The following is a 348-amino-acid chain: Ion-translocating oxidoreductase complex subunit D (348 aa).

5 consecutive transmembrane segments (helical) span residues 19–39 (FMLW…AFFG), 41–61 (GVVI…IVVA), 66–86 (KSTT…ILAM), 87–107 (AIPP…ALLL), and 122–142 (PAMV…TSWL). Threonine 186 carries the post-translational modification FMN phosphoryl threonine. Helical transmembrane passes span 212 to 232 (IFAR…LFLL), 236 to 256 (IIHW…SALT), 265 to 285 (LNVL…FIAT), 291 to 311 (SITP…AYLI), and 315 to 335 (GSYP…VPLI).

This sequence belongs to the NqrB/RnfD family. The complex is composed of six subunits: RnfA, RnfB, RnfC, RnfD, RnfE and RnfG. It depends on FMN as a cofactor.

The protein resides in the cell inner membrane. Part of a membrane-bound complex that couples electron transfer with translocation of ions across the membrane. The sequence is that of Ion-translocating oxidoreductase complex subunit D from Haemophilus ducreyi (strain 35000HP / ATCC 700724).